Reading from the N-terminus, the 158-residue chain is 2-C-methyl-D-erythritol 2,4-cyclodiphosphate synthase (158 aa).

The a divalent metal cation site is built by Asp-8 and His-10. Residues 8 to 10 (DVH) and 34 to 35 (HS) contribute to the 4-CDP-2-C-methyl-D-erythritol 2-phosphate site. Position 42 (His-42) interacts with a divalent metal cation. Residues 56-58 (DIG), 61-65 (FPDTD), 100-106 (AQAPKMA), 132-135 (TTSE), Phe-139, and Arg-142 contribute to the 4-CDP-2-C-methyl-D-erythritol 2-phosphate site.

This sequence belongs to the IspF family. In terms of assembly, homotrimer. Requires a divalent metal cation as cofactor.

The catalysed reaction is 4-CDP-2-C-methyl-D-erythritol 2-phosphate = 2-C-methyl-D-erythritol 2,4-cyclic diphosphate + CMP. It functions in the pathway isoprenoid biosynthesis; isopentenyl diphosphate biosynthesis via DXP pathway; isopentenyl diphosphate from 1-deoxy-D-xylulose 5-phosphate: step 4/6. Involved in the biosynthesis of isopentenyl diphosphate (IPP) and dimethylallyl diphosphate (DMAPP), two major building blocks of isoprenoid compounds. Catalyzes the conversion of 4-diphosphocytidyl-2-C-methyl-D-erythritol 2-phosphate (CDP-ME2P) to 2-C-methyl-D-erythritol 2,4-cyclodiphosphate (ME-CPP) with a corresponding release of cytidine 5-monophosphate (CMP). This is 2-C-methyl-D-erythritol 2,4-cyclodiphosphate synthase from Aliivibrio fischeri (strain ATCC 700601 / ES114) (Vibrio fischeri).